Here is a 259-residue protein sequence, read N- to C-terminus: Major prion protein (259 aa).

Residues 1 to 24 (MGKIQLGYWILVLFIVTWSDLGLC) form the signal peptide. Positions 25 to 235 (KKPKPRPGGG…EYEAAAQRAY (211 aa)) are interaction with GRB2, ERI3 and SYN1. The disordered stretch occupies residues 29-110 (PRPGGGWNSG…GYNKWKPDKP (82 aa)). Residues glycine 63, glycine 64, histidine 72, glycine 74, histidine 82, glycine 84, histidine 92, and glycine 94 each coordinate Cu(2+). The span at 91–101 (PHGGSNWGQGG) shows a compositional bias: gly residues. A disulfide bridge links cysteine 184 with cysteine 219. 2 N-linked (GlcNAc...) asparagine glycosylation sites follow: asparagine 186 and asparagine 202. Asparagine 236 carries GPI-anchor amidated asparagine lipidation. Residues 237–259 (MAFFSAPPVTLLFLSFLIFLIVS) constitute a propeptide, removed in mature form.

The protein belongs to the prion family. Monomer and homodimer. Has a tendency to aggregate into amyloid fibrils containing a cross-beta spine, formed by a steric zipper of superposed beta-strands. Soluble oligomers may represent an intermediate stage on the path to fibril formation. Copper binding may promote oligomerization. Interacts with GRB2, APP, ERI3/PRNPIP and SYN1. Mislocalized cytosolically exposed PrP interacts with MGRN1; this interaction alters MGRN1 subcellular location and causes lysosomal enlargement. Interacts with KIAA1191.

The protein resides in the cell membrane. The protein localises to the golgi apparatus. In terms of biological role, its primary physiological function is unclear. Has cytoprotective activity against internal or environmental stresses. May play a role in neuronal development and synaptic plasticity. May be required for neuronal myelin sheath maintenance. May play a role in iron uptake and iron homeostasis. Soluble oligomers are toxic to cultured neuroblastoma cells and induce apoptosis (in vitro). Association with GPC1 (via its heparan sulfate chains) targets PRNP to lipid rafts. Also provides Cu(2+) or Zn(2+) for the ascorbate-mediated GPC1 deaminase degradation of its heparan sulfate side chains. The sequence is that of Major prion protein (PRNP) from Trichosurus vulpecula (Brush-tailed possum).